A 461-amino-acid polypeptide reads, in one-letter code: Zinc transporter 6 (461 aa).

The Cytoplasmic segment spans residues 1–33 (MGTIHLFRKPQRSFFGKLLQEFRLVAADRRSWK). The helical transmembrane segment at 34–54 (ILLFGAINLTCTGFLLMWCSS) threads the bilayer. The Extracellular segment spans residues 55-64 (TNSIALTAYT). The chain crosses the membrane as a helical span at residues 65-85 (YLTIFDLFSLITCLVSYWVMM). Topologically, residues 86–98 (RKPSPAYSFGFER) are cytoplasmic. The helical transmembrane segment at 99 to 119 (LEVLAVFASTVLAQLGALFIL) threads the bilayer. The Extracellular portion of the chain corresponds to 120–134 (KESAERFLEQPEIHT). A helical membrane pass occupies residues 135-155 (GRLLVGTFVALSFNLFTMLSI). Over 156 to 200 (RNKPFAYVSEAASTSWLQEHVADLSRSLCGIIPGLSSIFLPRMNP) the chain is Cytoplasmic. The chain crosses the membrane as a helical span at residues 201-221 (FVLIDLAGAFALCITYMLIEI). At 222-223 (NN) the chain is on the extracellular side. A helical membrane pass occupies residues 224–244 (YFAVDTASAIAIALMTFGTMY). The Cytoplasmic segment spans residues 245-461 (PMSVYSGKVL…TNNRIGQPRP (217 aa)). The segment at 362-393 (PPLKGTDDSNPVTSTPTKPSSPPPEFSFNTPG) is disordered. Residues 370-379 (SNPVTSTPTK) are compositionally biased toward low complexity.

This sequence belongs to the cation diffusion facilitator (CDF) transporter (TC 2.A.4) family. SLC30A subfamily. In terms of assembly, heterodimer with SLC30A5; form a functional zinc ion transmembrane transporter.

Its subcellular location is the golgi apparatus. The protein resides in the trans-Golgi network membrane. Functionally, has probably no intrinsic transporter activity but together with SLC30A5 forms a functional zinc ion:proton antiporter heterodimer, mediating zinc entry into the lumen of organelles along the secretory pathway. As part of that zinc ion:proton antiporter, contributes to zinc ion homeostasis within the early secretory pathway and regulates the activation and folding of enzymes like alkaline phosphatases and enzymes involved in phosphatidylinositol glycan anchor biosynthesis. This Bos taurus (Bovine) protein is Zinc transporter 6 (SLC30A6).